A 76-amino-acid polypeptide reads, in one-letter code: uncharacterized protein (76 aa).

3 helical membrane-spanning segments follow: residues 2–22 (LKVA…YSLF), 28–48 (LLIV…VEAI), and 56–76 (EYLL…KFII).

The protein localises to the cell membrane. This is an uncharacterized protein from Bacillus subtilis (strain 168).